We begin with the raw amino-acid sequence, 468 residues long: UDP-N-acetylmuramate--L-alanine ligase (468 aa).

G112 to T118 provides a ligand contact to ATP.

Belongs to the MurCDEF family.

It localises to the cytoplasm. It carries out the reaction UDP-N-acetyl-alpha-D-muramate + L-alanine + ATP = UDP-N-acetyl-alpha-D-muramoyl-L-alanine + ADP + phosphate + H(+). It participates in cell wall biogenesis; peptidoglycan biosynthesis. In terms of biological role, cell wall formation. This is UDP-N-acetylmuramate--L-alanine ligase from Bordetella bronchiseptica (strain ATCC BAA-588 / NCTC 13252 / RB50) (Alcaligenes bronchisepticus).